An 802-amino-acid polypeptide reads, in one-letter code: Receptor-type tyrosine-protein phosphatase alpha (802 aa).

A signal peptide spans 1 to 19 (MDSWFILVLLGSGLICVSA). At 20 to 151 (NNATTVAPSV…DSKDRRDETP (132 aa)) the chain is on the extracellular side. N-linked (GlcNAc...) asparagine glycans are attached at residues Asn21 and Asn36. Residues 39 to 59 (TAEPVKEEAKTSNPTSSLTSL) form a disordered region. N-linked (GlcNAc...) asparagine glycosylation is found at Asn68, Asn80, Asn86, Asn104, and Asn124. Composition is skewed to polar residues over residues 79–115 (VNSS…QFTD) and 123–141 (GNSS…SGNS). Residues 79–146 (VNSSDSDNGT…PSGNSDSKDR (68 aa)) are disordered. Residues 152-174 (IIAVMVALSSLLVIVFIIIVLYM) traverse the membrane as a helical segment. Topologically, residues 175-802 (LRFKKYKQAG…DAFSDYANFK (628 aa)) are cytoplasmic. A phosphoserine mark is found at Ser211 and Ser213. Tyrosine-protein phosphatase domains are found at residues 241–501 (FREE…LLEH) and 533–791 (LEEE…VQEY). Substrate contacts are provided by residues Asp410, 442-448 (CSAGVGR), and Gln486. Cys442 serves as the catalytic Phosphocysteine intermediate. The active-site Phosphocysteine intermediate is the Cys732. Position 798 is a phosphotyrosine (Tyr798).

Belongs to the protein-tyrosine phosphatase family. Receptor class 4 subfamily. In terms of assembly, part of a complex comprised of PTPRA, BCAR1, BCAR3 (via SH2 domain), and SRC. Within the complex, interacts (when phosphorylated on Tyr-798) with BCAR3 (via SH2 domain). Interacts with GRB2. In terms of processing, integrin binding to extracellular matrix induces phosphorylation at Tyr-798 which induces PTPRA localization and recruitment of BCAR3, BCAR1 and CRK to focal adhesions.

Its subcellular location is the cell membrane. It localises to the cell junction. It is found in the focal adhesion. The catalysed reaction is O-phospho-L-tyrosyl-[protein] + H2O = L-tyrosyl-[protein] + phosphate. In terms of biological role, tyrosine protein phosphatase which is involved in integrin-mediated focal adhesion formation. Following integrin engagement, specifically recruits BCAR3, BCAR1 and CRK to focal adhesions thereby promoting SRC-mediated phosphorylation of BRAC1 and the subsequent activation of PAK and small GTPase RAC1 and CDC42. In Homo sapiens (Human), this protein is Receptor-type tyrosine-protein phosphatase alpha (PTPRA).